Consider the following 348-residue polypeptide: Protein lifeguard 1 (348 aa).

The tract at residues Met1–Ser118 is disordered. The span at Tyr14–Pro41 shows a compositional bias: pro residues. Low complexity predominate over residues Tyr42–Tyr57. Residues Gly82 to Gln101 are compositionally biased toward pro residues. 7 helical membrane passes run Val142–Phe162, Val174–Cys194, Leu205–Phe225, Ala230–Met250, Met260–Ile280, Ile284–Asp304, and Phe323–Ile343.

The protein belongs to the BI1 family. LFG subfamily.

The protein resides in the membrane. In terms of biological role, potential apoptotic regulator. This Rattus norvegicus (Rat) protein is Protein lifeguard 1 (Grina).